A 250-amino-acid chain; its full sequence is Sperm-egg fusion protein Juno (250 aa).

Positions 1–19 (MACWWPLLLELWTVMPTWA) are cleaved as a signal peptide. 8 cysteine pairs are disulfide-bonded: C27–C55, C47–C95, C56–C99, C79–C172, C86–C143, C132–C206, C136–C186, and C149–C166. The segment at 62-81 (WEAHLDVSPLYNFSLFHCGL) is important for interaction with IZUMO1. The N-linked (GlcNAc...) asparagine glycan is linked to N73. The GPI-anchor amidated serine moiety is linked to residue S228. Residues 229–250 (SAPSWELSYTIMVCSLFLPFLS) constitute a propeptide that is removed on maturation.

It belongs to the folate receptor family. Monomer. Interacts with IZUMO1; the interaction is direct. IZUMO1 and IZUMO1R/JUNO form a complex with 1:1 stoichiometry. Interacts with FCRL3/MAIA; FCRL3/MAIA replaces IZUMO1R/JUNO as IZUMO1 receptor after sperm-egg adhesion, thereby permitting species-specific gamete fusion. Interacts with WDR54. In terms of processing, the protein is rapidly cleaved following fertilization, being only weakly detectable in zona-intact fertilized eggs at telophase II and undetectable at the pronuclear stage. Sheding is probably required to block to polyspermy and ensuring egg fusion with a single sperm. Expressed in unfertilized oocytes (at protein level).

It localises to the cell membrane. It is found in the cell projection. The protein resides in the microvillus membrane. Its function is as follows. Receptor for IZUMO1 present at the cell surface of oocytes (oolemma), which is essential for species-specific gamete recognition and fertilization. The IZUMO1:IZUMO1R/JUNO interaction is a necessary adhesion event between sperm and egg that is required for fertilization but is not sufficient for cell fusion. The ligand-receptor interaction probably does not act as a membrane 'fusogen'. Does not bind folate. The polypeptide is Sperm-egg fusion protein Juno (Homo sapiens (Human)).